A 300-amino-acid chain; its full sequence is tRNA dimethylallyltransferase (300 aa).

9 to 16 (GPTASGKS) serves as a coordination point for ATP. Substrate is bound at residue 11–16 (TASGKS). Positions 34–37 (DSKQ) are interaction with substrate tRNA.

Belongs to the IPP transferase family. As to quaternary structure, monomer. It depends on Mg(2+) as a cofactor.

The catalysed reaction is adenosine(37) in tRNA + dimethylallyl diphosphate = N(6)-dimethylallyladenosine(37) in tRNA + diphosphate. Catalyzes the transfer of a dimethylallyl group onto the adenine at position 37 in tRNAs that read codons beginning with uridine, leading to the formation of N6-(dimethylallyl)adenosine (i(6)A). The polypeptide is tRNA dimethylallyltransferase (Ehrlichia ruminantium (strain Welgevonden)).